Here is a 510-residue protein sequence, read N- to C-terminus: Maturase K (510 aa).

Belongs to the intron maturase 2 family. MatK subfamily.

Its subcellular location is the plastid. It localises to the chloroplast. Its function is as follows. Usually encoded in the trnK tRNA gene intron. Probably assists in splicing its own and other chloroplast group II introns. The chain is Maturase K from Cestrum elegans (Red cestrum).